The sequence spans 514 residues: Protein p59 (514 aa).

It is found in the virion. The polypeptide is Protein p59 (Lettuce infectious yellows virus (isolate United States/92) (LIYV)).